The following is a 263-amino-acid chain: MARRRRHRGPRRPRPPGPTGAVPTAQSQVTSTPNSEPAVRSAPAAAPPPPPASGPPPSCSLLLRQWLHVPESASDDDDDDDWPDSPPPEPAPEARPTAAAPRPRSPPPGAGPGGGANPSHPPSRPFRLPPRLALRLRVTAEHLARLRLRRAGGEGAPEPPATPATPATPATPATPATPATPATPATPATPARVRFSPHVRVRHLVVWASAARLARRGSWARERADRARFRRRVAEAEAVIGPCLGPEARARALARGAGPANSV.

Residues 1–14 (MARRRRHRGPRRPR) show a composition bias toward basic residues. Residues 1-16 (MARRRRHRGPRRPRPP) are required for nucleolar localization. Disordered regions lie at residues 1-128 (MARR…PFRL) and 149-190 (RRAG…PATP). Over residues 24–35 (TAQSQVTSTPNS) the composition is skewed to polar residues. Residues 45–58 (AAPPPPPASGPPPS) are compositionally biased toward pro residues. Positions 73-83 (ASDDDDDDDWP) are enriched in acidic residues. 2 stretches are compositionally biased toward pro residues: residues 84–93 (DSPPPEPAPE) and 119–128 (SHPPSRPFRL). The Nuclear export signal signature appears at 128 to 137 (LPPRLALRLR). 10 consecutive repeat copies span residues 161-163 (ATP), 164-166 (ATP), 167-169 (ATP), 170-172 (ATP), 173-175 (ATP), 176-178 (ATP), 179-181 (ATP), 182-184 (ATP), 185-187 (ATP), and 188-190 (ATP). Residues 161-190 (ATPATPATPATPATPATPATPATPATPATP) are 10 X 3 AA tandem repeats of A-T-P. Positions 164 to 190 (ATPATPATPATPATPATPATPATPATP) are enriched in low complexity. An interaction with host PPP1CA region spans residues 190–203 (PARVRFSPHVRVRH). The interval 205–263 (VVWASAARLARRGSWARERADRARFRRRVAEAEAVIGPCLGPEARARALARGAGPANSV) is important for interferon resistance. The short motif at 215–233 (RRGSWARERADRARFRRRV) is the Bipartite nuclear localization signal element. The segment at 233–248 (VAEAEAVIGPCLGPEA) is interaction with host EIF2S1/EIF-2ALPHA.

This sequence belongs to the PPP1R15 family. In terms of assembly, interacts with host PPP1CA; this interaction to forms a high-molecular-weight complex that dephosphorylates EIF2S1/eIF-2alpha. Interacts with host EIF2S1/eIF-2alpha; this interaction is crucial for the specific dephosphorylation of EIF2S1/eIF-2alpha by PPP1CA. Binds to proliferating cell nuclear antigen (PCNA), which may release host cells from growth arrest and facilitate viral replication. Interacts (via N-terminus) with host C1QBP; this interaction allows C1QBP to be recruited to the inner nuclear membrane by ICP34.5. Interacts with host PRKCA. Interacts with protein UL31. Interacts with host STING/TMEM173; this interaction inhibits the intracellular DNA sensing pathway. Interacts with host BECN1; this interaction modulates host autophagy.

Its subcellular location is the host cytoplasm. It localises to the host nucleus. The protein localises to the host nucleolus. The protein resides in the virion. In terms of biological role, inhibits the establishment of the immune response and of the integrated stress response (ISR) in the infected cell. Plays essential roles in viral nuclear egress to mediate capsid transit across the nuclear membrane. Facilitates nuclear egress cooperatively with host C1QBP and protein kinase C/PKC to induce lamin A/C phosphorylation and subsequent reorganization. In turn, lamina disassembles and nuclear egress occurs. Recruits the serine/threonine protein phosphatase PPP1CA/PP1-alpha to dephosphorylate the translation initiation factor EIF2S1/eIF-2alpha, thereby couteracting the host shutoff of protein synthesis involving double-stranded RNA-dependent protein kinase EIF2AK2/PKR. In turn, controls host IRF3 activation and subsequently inhibits host interferon response. Controls the DNA sensing pathway by interacting with and inhibiting host STING/TMEM173. Also down-modulates the host MHC class II proteins cell surface expression. Acts as a neurovirulence factor that has a profound effect on the growth of the virus in central nervous system tissue, by interacting with host BECN1 and thereby antagonizing the host autophagy response. The protein is Neurovirulence factor ICP34.5 (RL1) of Human herpesvirus 1 (strain F) (HHV-1).